The chain runs to 191 residues: 3-isopropylmalate dehydratase small subunit (191 aa).

The protein belongs to the LeuD family. LeuD type 1 subfamily. As to quaternary structure, heterodimer of LeuC and LeuD.

The catalysed reaction is (2R,3S)-3-isopropylmalate = (2S)-2-isopropylmalate. Its pathway is amino-acid biosynthesis; L-leucine biosynthesis; L-leucine from 3-methyl-2-oxobutanoate: step 2/4. In terms of biological role, catalyzes the isomerization between 2-isopropylmalate and 3-isopropylmalate, via the formation of 2-isopropylmaleate. This Lactococcus lactis subsp. cremoris (strain MG1363) protein is 3-isopropylmalate dehydratase small subunit.